We begin with the raw amino-acid sequence, 404 residues long: Cysteine desulfurase IscS (404 aa).

Pyridoxal 5'-phosphate is bound by residues 75–76, Asn-155, Gln-183, and 203–205; these read AT and TSH. Lys-206 is subject to N6-(pyridoxal phosphate)lysine. Thr-243 is a binding site for pyridoxal 5'-phosphate. Cys-328 (cysteine persulfide intermediate) is an active-site residue. Cys-328 lines the [2Fe-2S] cluster pocket.

The protein belongs to the class-V pyridoxal-phosphate-dependent aminotransferase family. NifS/IscS subfamily. In terms of assembly, homodimer. Forms a heterotetramer with IscU, interacts with other sulfur acceptors. Pyridoxal 5'-phosphate is required as a cofactor.

It localises to the cytoplasm. The catalysed reaction is (sulfur carrier)-H + L-cysteine = (sulfur carrier)-SH + L-alanine. Its pathway is cofactor biosynthesis; iron-sulfur cluster biosynthesis. Its function is as follows. Master enzyme that delivers sulfur to a number of partners involved in Fe-S cluster assembly, tRNA modification or cofactor biosynthesis. Catalyzes the removal of elemental sulfur atoms from cysteine to produce alanine. Functions as a sulfur delivery protein for Fe-S cluster synthesis onto IscU, an Fe-S scaffold assembly protein, as well as other S acceptor proteins. The chain is Cysteine desulfurase IscS from Photobacterium profundum (strain SS9).